A 738-amino-acid chain; its full sequence is Polyphosphate kinase (738 aa).

The interval 1–48 (MIGNDRWVTEIETGPVTEARPDTNAREPGDRTPAAPPAATPAATTDQL) is disordered. A compositionally biased stretch (basic and acidic residues) spans 19-30 (ARPDTNAREPGD). Asparagine 91 contributes to the ATP binding site. Arginine 427 and arginine 457 together coordinate Mg(2+). Histidine 487 acts as the Phosphohistidine intermediate in catalysis. ATP contacts are provided by tyrosine 520, arginine 620, and histidine 648.

This sequence belongs to the polyphosphate kinase 1 (PPK1) family. The cofactor is Mg(2+). An intermediate of this reaction is the autophosphorylated ppk in which a phosphate is covalently linked to a histidine residue through a N-P bond.

It carries out the reaction [phosphate](n) + ATP = [phosphate](n+1) + ADP. Functionally, catalyzes the reversible transfer of the terminal phosphate of ATP to form a long-chain polyphosphate (polyP). The chain is Polyphosphate kinase from Mycobacterium ulcerans (strain Agy99).